The chain runs to 816 residues: Pentatricopeptide repeat-containing protein At5g12100, mitochondrial (816 aa).

A mitochondrion-targeting transit peptide spans 1-39 (MVTRLRLVSRSSRYATVKFTDSVSACSCRRLFSASTDPE). Positions 34-57 (ASTDPEPESQPEQAPPTNPVTGDE) are disordered. 20 PPR repeats span residues 108-142 (HDFS…GIYP), 143-177 (SSDS…DFRP), 178-212 (SKFM…RIYP), 213-247 (SVFI…RLLP), 248-282 (SLIT…HIEP), 283-317 (SLIT…GFVP), 318-352 (DAFT…GVKM), 353-387 (NAYT…GLVP), 388-422 (NEVI…GMKP), 423-457 (DHLA…GVSP), 458-492 (SVET…GTMP), 493-527 (NVVS…GVSP), 528-562 (KVRI…GIEL), 563-597 (NLVT…GLKP), 598-632 (DVFT…GIKP), 633-662 (TLKT…MSLK), 664-698 (DLLV…SIGL), 699-733 (DKTT…EMEP), 734-768 (EADT…GFLL), and 769-803 (DVCI…MLGD).

It belongs to the PPR family. P subfamily.

The protein localises to the mitochondrion. In Arabidopsis thaliana (Mouse-ear cress), this protein is Pentatricopeptide repeat-containing protein At5g12100, mitochondrial.